We begin with the raw amino-acid sequence, 346 residues long: Leucine zipper protein 2 (346 aa).

An N-terminal signal peptide occupies residues 1–19; it reads MKFSPAHYLLPLLPALVLS. Residues 16 to 211 adopt a coiled-coil conformation; the sequence is LVLSTRQDYE…QMKAMKETVQ (196 aa). The N-linked (GlcNAc...) asparagine glycan is linked to Asn-133. Residues 164-192 are leucine-zipper; the sequence is LRYGKKDLLFKAQQLTDLEQKLAVAKNEL. 2 disordered regions span residues 221 to 240 and 248 to 346; these read QPPP…LLPP and PDAA…EKIL. Residues 250 to 261 are compositionally biased toward low complexity; that stretch reads AAAKSKPQQSAS. Residues 262–283 are compositionally biased toward polar residues; that stretch reads GNNESSQVESTKEGNPSTTACD. An N-linked (GlcNAc...) asparagine glycan is attached at Asn-264. Residues 286 to 298 are compositionally biased toward basic and acidic residues; it reads DEGRPCSMKHKES. Asn-302 carries an N-linked (GlcNAc...) asparagine glycan.

It localises to the secreted. The sequence is that of Leucine zipper protein 2 (LUZP2) from Homo sapiens (Human).